A 267-amino-acid chain; its full sequence is Undecaprenyl-diphosphatase (267 aa).

The next 8 membrane-spanning stretches (helical) occupy residues 1-21 (MTLF…FLPV), 40-60 (GLAI…LYFW), 83-103 (AFLA…GLII), 111-131 (MMRS…VLYW), 144-164 (GWTL…LIPG), 189-209 (AMLM…ADVI), 219-239 (DGAL…ALMM), and 245-265 (VSFT…LVYA).

It belongs to the UppP family.

The protein resides in the cell inner membrane. The catalysed reaction is di-trans,octa-cis-undecaprenyl diphosphate + H2O = di-trans,octa-cis-undecaprenyl phosphate + phosphate + H(+). Functionally, catalyzes the dephosphorylation of undecaprenyl diphosphate (UPP). Confers resistance to bacitracin. This is Undecaprenyl-diphosphatase from Roseobacter denitrificans (strain ATCC 33942 / OCh 114) (Erythrobacter sp. (strain OCh 114)).